Reading from the N-terminus, the 277-residue chain is Undecaprenyl-diphosphatase (277 aa).

Transmembrane regions (helical) follow at residues 11-31, 47-67, 96-116, 123-143, 153-173, 197-217, 227-247, and 254-274; these read WWQA…PISS, AGAS…LIYF, VGIL…KAIW, LWVI…AEQT, LGIW…IPGV, SFLL…ISEF, LGTL…IQFL, and LFIV…ALGF.

Belongs to the UppP family.

The protein localises to the cell inner membrane. It catalyses the reaction di-trans,octa-cis-undecaprenyl diphosphate + H2O = di-trans,octa-cis-undecaprenyl phosphate + phosphate + H(+). Catalyzes the dephosphorylation of undecaprenyl diphosphate (UPP). Confers resistance to bacitracin. The protein is Undecaprenyl-diphosphatase of Synechococcus sp. (strain JA-2-3B'a(2-13)) (Cyanobacteria bacterium Yellowstone B-Prime).